The following is a 572-amino-acid chain: Proline--tRNA ligase (572 aa).

This sequence belongs to the class-II aminoacyl-tRNA synthetase family. ProS type 1 subfamily. Homodimer.

The protein localises to the cytoplasm. It carries out the reaction tRNA(Pro) + L-proline + ATP = L-prolyl-tRNA(Pro) + AMP + diphosphate. Its function is as follows. Catalyzes the attachment of proline to tRNA(Pro) in a two-step reaction: proline is first activated by ATP to form Pro-AMP and then transferred to the acceptor end of tRNA(Pro). As ProRS can inadvertently accommodate and process non-cognate amino acids such as alanine and cysteine, to avoid such errors it has two additional distinct editing activities against alanine. One activity is designated as 'pretransfer' editing and involves the tRNA(Pro)-independent hydrolysis of activated Ala-AMP. The other activity is designated 'posttransfer' editing and involves deacylation of mischarged Ala-tRNA(Pro). The misacylated Cys-tRNA(Pro) is not edited by ProRS. The protein is Proline--tRNA ligase of Escherichia fergusonii (strain ATCC 35469 / DSM 13698 / CCUG 18766 / IAM 14443 / JCM 21226 / LMG 7866 / NBRC 102419 / NCTC 12128 / CDC 0568-73).